A 409-amino-acid chain; its full sequence is Coagulation factor IX (409 aa).

11 residues coordinate Ca(2+): Tyr1, Asn2, Glu7, Glu8, Glu16, Glu18, Glu21, Glu22, Glu27, Glu28, and Glu31. The Gla domain occupies 1 to 47 (YNSGKLEESFVRGNLERECIEEKCSFEEAREVFENTEKTNEFWKQYV). A 4-carboxyglutamate mark is found at Glu7, Glu8, Glu16, Glu18, Glu21, Glu22, Glu27, Glu28, Glu31, Glu34, Glu37, and Glu41. Glu16 contributes to the Mg(2+) binding site. Residues Cys19 and Cys24 are joined by a disulfide bond. Residue Glu21 participates in Mg(2+) binding. Glu27 contacts Mg(2+). Glu31 is a Mg(2+) binding site. The Ca(2+) site is built by Glu37, Glu41, Asp48, Gly49, and Gln51. The Mg(2+) site is built by Glu37 and Glu41. The EGF-like 1; calcium-binding domain maps to 48–84 (DGDQCEPNPCLNGGLCKDDINSYECWCQVGFEGKNCE). Cystine bridges form between Cys52–Cys63, Cys57–Cys72, Cys74–Cys83, Cys89–Cys100, Cys96–Cys110, Cys112–Cys125, Cys133–Cys291, Cys208–Cys224, Cys338–Cys352, and Cys363–Cys391. Residues Asp65 and Asp66 each contribute to the Ca(2+) site. At Asp65 the chain carries (3R)-3-hydroxyaspartate. The residue at position 69 (Ser69) is a Phosphoserine. The EGF-like 2 domain maps to 85-126 (LDATCNIKNGRCKQFCKTGADSKVLCSCTTGYRLAPDQKSCK). Positions 148-182 (AEIIFSNMDYENSTEVEPILDSLTESNQSSDDFIR) are cleaved as a propeptide — activation peptide. At Tyr157 the chain carries Sulfotyrosine. Ser160 is subject to Phosphoserine. At Thr161 the chain carries Phosphothreonine; alternate. A glycan (O-linked (GalNAc...) threonine; alternate) is linked at Thr161. A glycan (O-linked (GalNAc...) threonine) is linked at Thr171. Asn174 is a glycosylation site (N-linked (GlcNAc...) asparagine). A Peptidase S1 domain is found at 183-409 (IVGGENAKPG…YTKVSRYVNW (227 aa)). The active-site Charge relay system is the His223. 5 residues coordinate Ca(2+): Glu237, Asn239, Glu242, Glu244, and Glu247. A glycan (N-linked (GlcNAc...) asparagine) is linked at Asn262. Asp271 serves as the catalytic Charge relay system. The active-site Charge relay system is Ser367.

This sequence belongs to the peptidase S1 family. As to quaternary structure, heterodimer of a light chain and a heavy chain; disulfide-linked. Interacts (inactive and activated) with F11 (activated) in calcium-dependent manner. Interacts with SERPINC1. Post-translationally, activated by factor XIa, which excises the activation peptide. The propeptide can also be removed by snake venom protease. Activated by coagulation factor VIIa-tissue factor (F7-F3) complex in calcium-dependent manner. In terms of processing, the iron and 2-oxoglutarate dependent 3-hydroxylation of aspartate and asparagine is (R) stereospecific within EGF domains.

Its subcellular location is the secreted. The catalysed reaction is Selective cleavage of Arg-|-Ile bond in factor X to form factor Xa.. Functionally, factor IX is a vitamin K-dependent plasma protein that participates in the intrinsic pathway of blood coagulation by converting factor X to its active form in the presence of Ca(2+) ions, phospholipids, and factor VIIIa. This is Coagulation factor IX (F9) from Sus scrofa (Pig).